Consider the following 85-residue polypeptide: Large ribosomal subunit protein bL27 (85 aa).

Belongs to the bacterial ribosomal protein bL27 family.

The chain is Large ribosomal subunit protein bL27 from Campylobacter concisus (strain 13826).